Consider the following 340-residue polypeptide: Ketol-acid reductoisomerase (NADP(+)) (340 aa).

The KARI N-terminal Rossmann domain maps to 1-183; sequence MAITVYYDKD…GGGRTGIIET (183 aa). NADP(+) contacts are provided by residues 26-29, R49, S52, S54, and 84-87; these read FGSQ and DEIQ. H109 is a catalytic residue. G135 serves as a coordination point for NADP(+). One can recognise a KARI C-terminal knotted domain in the interval 184-329; it reads TFKAETETDL…RNLRAMMPWI (146 aa). Mg(2+) contacts are provided by D192, E196, E228, and E232. A substrate-binding site is contributed by S253.

It belongs to the ketol-acid reductoisomerase family. It depends on Mg(2+) as a cofactor.

The catalysed reaction is (2R)-2,3-dihydroxy-3-methylbutanoate + NADP(+) = (2S)-2-acetolactate + NADPH + H(+). It carries out the reaction (2R,3R)-2,3-dihydroxy-3-methylpentanoate + NADP(+) = (S)-2-ethyl-2-hydroxy-3-oxobutanoate + NADPH + H(+). Its pathway is amino-acid biosynthesis; L-isoleucine biosynthesis; L-isoleucine from 2-oxobutanoate: step 2/4. It functions in the pathway amino-acid biosynthesis; L-valine biosynthesis; L-valine from pyruvate: step 2/4. Involved in the biosynthesis of branched-chain amino acids (BCAA). Catalyzes an alkyl-migration followed by a ketol-acid reduction of (S)-2-acetolactate (S2AL) to yield (R)-2,3-dihydroxy-isovalerate. In the isomerase reaction, S2AL is rearranged via a Mg-dependent methyl migration to produce 3-hydroxy-3-methyl-2-ketobutyrate (HMKB). In the reductase reaction, this 2-ketoacid undergoes a metal-dependent reduction by NADPH to yield (R)-2,3-dihydroxy-isovalerate. This chain is Ketol-acid reductoisomerase (NADP(+)), found in Campylobacter jejuni subsp. jejuni serotype O:23/36 (strain 81-176).